The sequence spans 494 residues: Cytochrome P450 2A8 (494 aa).

C439 is a heme binding site.

This sequence belongs to the cytochrome P450 family. Requires heme as cofactor. As to expression, liver.

The protein resides in the endoplasmic reticulum membrane. It is found in the microsome membrane. It carries out the reaction an organic molecule + reduced [NADPH--hemoprotein reductase] + O2 = an alcohol + oxidized [NADPH--hemoprotein reductase] + H2O + H(+). Functionally, highly active in 7-ethoxycoumarin O-deethylation, and benzphetamine N-demethylation; moderately active in testosterone 7-alpha-hydroxylation, ethylmorphine N-demethylation, p-nitroanisole O-demethylation; and only slightly active in benzopyrene 3-hydroxylation, 7-ethoxyresorufin O-deethylation, testosterone 2-alpha-hydroxylation and testosterone 17-oxidation. Competent in the metabolic activation of aflatoxin B1. In Mesocricetus auratus (Golden hamster), this protein is Cytochrome P450 2A8 (CYP2A8).